A 213-amino-acid chain; its full sequence is Homeobox protein koza (213 aa).

The disordered stretch occupies residues 24–72; the sequence is ILSHMGPGSKEKSLGFPKTDQDQDSSLRDTEEKYASEKLQSSSQPAEIH. Residues 32-59 are compositionally biased toward basic and acidic residues; sequence SKEKSLGFPKTDQDQDSSLRDTEEKYAS. The homeobox DNA-binding region spans 102–161; that stretch reads QKRSRAAFSHSQVIELERKFSSQKYLSAPERAQLAKSLKLTETQVKIWFQNRRYKTKRKQ.

The protein belongs to the NK-3 homeobox family. In terms of tissue distribution, expressed in the muscle layer of embryonic somites. In tailbud embryos, expressed throughout the entire myotome but at the mid-tailbud stage (stage 32), expression becomes restricted to the outer periphery of the somite so that by the tadpole stage only the outer, type I cells show expression. Also expressed in the dorsal cement gland and in the myocardial layer of the developing heart. In all tissues, expression begins after terminal differentiation.

Its subcellular location is the nucleus. Functionally, may regulate cell proliferation in a tissue-specific manner. The polypeptide is Homeobox protein koza (Xenopus laevis (African clawed frog)).